The sequence spans 453 residues: Odorant receptor 83a (453 aa).

The Cytoplasmic segment spans residues 1 to 28; the sequence is MKSTFKEERIKDDSKRRDLFVFVRQTMC. A helical membrane pass occupies residues 29 to 49; sequence IAAMYPFGYYVNGSGVLAVLV. Residues 50–85 lie on the Extracellular side of the membrane; the sequence is RFCDLTYELFNYFVSVHIAGLYICTIYINYGQGDLD. Residues 86–106 form a helical membrane-spanning segment; the sequence is FFVNCLIQTIIYLWTIAMKLY. At 107–148 the chain is on the cytoplasmic side; the sequence is FRRFRPGLLNTILSNINDEYETRSAVGFSFVTMAGSYRMSKL. Residues 149–169 traverse the membrane as a helical segment; it reads WIKTYVYCCYIGTIFWLALPI. Residues 170–203 are Extracellular-facing; that stretch reads AYRDRSLPLACWYPFDYTQPGVYEVVFLLQAMGQ. The chain crosses the membrane as a helical span at residues 204–224; sequence IQVAASFASSSGLHMVLCVLI. Over 225-322 the chain is Cytoplasmic; sequence SGQYDVLFCS…ALKKIESFYS (98 aa). Residues 323–343 form a helical membrane-spanning segment; sequence PIWFVKIGEVTFLMCLVAFVS. Topologically, residues 344-359 are extracellular; the sequence is TKSTAANSFMRMVSLG. Residues 360-380 traverse the membrane as a helical segment; that stretch reads QYLLLVLYELFIICYFADIVF. Topologically, residues 381–408 are cytoplasmic; sequence QNSQRCGEALWRSPWQRHLKDVRSDYMF. A helical membrane pass occupies residues 409–429; it reads FMLNSRRQFQLTAGKISNLNV. The Extracellular segment spans residues 430–453; that stretch reads DRFRGTITTAFSFLTLLQKMDARE.

It belongs to the insect chemoreceptor superfamily. Heteromeric odorant receptor channel (TC 1.A.69) family. Or2a subfamily. In terms of assembly, interacts with Orco. Complexes exist early in the endomembrane system in olfactory sensory neurons (OSNs), coupling these complexes to the conserved ciliary trafficking pathway.

It localises to the cell membrane. In terms of biological role, odorant receptor which mediates acceptance or avoidance behavior, depending on its substrates. The odorant receptor repertoire encodes a large collection of odor stimuli that vary widely in identity, intensity, and duration. May form a complex with Orco to form odorant-sensing units, providing sensitive and prolonged odorant signaling and calcium permeability. Involved in the behavioral responses to pentanol, ethyl acetate, and propyl acetate. This Drosophila melanogaster (Fruit fly) protein is Odorant receptor 83a (Or83a).